The following is a 458-amino-acid chain: SH2 domain-containing protein 7 (458 aa).

Positions 51–142 constitute an SH2 domain; it reads WFHGFITRKQ…PFGETLAAAC (92 aa). Disordered stretches follow at residues 204-235 and 267-326; these read RSVS…SPAG and AGSL…TLGS. The span at 278-288 shows a compositional bias: basic and acidic residues; it reads PSGKLSDEDQN. Residues 304–326 are compositionally biased toward polar residues; it reads QGSTMPYTSLGFSLPPSSETLGS.

The chain is SH2 domain-containing protein 7 (Sh2d7) from Mus musculus (Mouse).